A 362-amino-acid polypeptide reads, in one-letter code: Ferredoxin--NADP reductase, leaf isozyme 1, chloroplastic (362 aa).

The transit peptide at 1–36 (MAAVTAAAVSTSAAAAVTKASPSPAHCFLPCPPRTR) directs the protein to the chloroplast. The 123-residue stretch at 83–205 (KEPYVGKCLL…TGPVGKEMLM (123 aa)) folds into the FAD-binding FR-type domain. FAD is bound by residues 141–144 (RLYS), 162–164 (CVK), Tyr-168, 179–181 (VCS), and Thr-220. Residues Ser-144 and Lys-164 each contribute to the NADP(+) site. Cys-180 and Cys-185 are disulfide-bonded. Ser-181 carries the phosphoserine modification. NADP(+) contacts are provided by residues Thr-220, 252 to 253 (VP), 282 to 283 (SR), Lys-292, 321 to 322 (GL), and Glu-360.

Belongs to the ferredoxin--NADP reductase type 1 family. As to quaternary structure, heterodimer with LFNR2. Component of high molecular weight thylakoid LFNRs-containing protein complexes containing LIR1, LFNR1, LFNR2, TIC62 and TROL proteins. Interacts directly with LFNR1 and LFNR2; LIR1 increases the affinity of LFNR1 and LFNR2 for TIC62 and subsequent thylakoid relocalization. The cofactor is FAD. May form interchain disulfide bonds with LIR1.

The protein localises to the plastid. It is found in the chloroplast stroma. It localises to the chloroplast thylakoid membrane. It catalyses the reaction 2 reduced [2Fe-2S]-[ferredoxin] + NADP(+) + H(+) = 2 oxidized [2Fe-2S]-[ferredoxin] + NADPH. The protein operates within energy metabolism; photosynthesis. Its function is as follows. Plays a key role in regulating the relative amounts of cyclic and non-cyclic electron flow to meet the demands of the plant for ATP and reducing power. The sequence is that of Ferredoxin--NADP reductase, leaf isozyme 1, chloroplastic from Oryza sativa subsp. indica (Rice).